Here is a 299-residue protein sequence, read N- to C-terminus: Polyamine aminopropyltransferase (299 aa).

Residues 6–252 form the PABS domain; it reads IVLLFALLCT…SLPNQQALQQ (247 aa). Residues Gln36, Glu120, and 147 to 148 each bind S-methyl-5'-thioadenosine; that span reads DA. The active-site Proton acceptor is Asp168.

The protein belongs to the spermidine/spermine synthase family. As to quaternary structure, homodimer or homotetramer.

The protein resides in the cytoplasm. The enzyme catalyses S-adenosyl 3-(methylsulfanyl)propylamine + putrescine = S-methyl-5'-thioadenosine + spermidine + H(+). It functions in the pathway amine and polyamine biosynthesis; spermidine biosynthesis; spermidine from putrescine: step 1/1. Its function is as follows. Catalyzes the irreversible transfer of a propylamine group from the amino donor S-adenosylmethioninamine (decarboxy-AdoMet) to putrescine (1,4-diaminobutane) to yield spermidine. This chain is Polyamine aminopropyltransferase, found in Vibrio vulnificus (strain CMCP6).